The primary structure comprises 306 residues: D-alanine--D-alanine ligase (306 aa).

Residues 101-303 (KLLWQGAGLP…FSQLVVRILE (203 aa)) enclose the ATP-grasp domain. 134-189 (ISALGLPLIVKPSREGSSVGMTKVVEENALQGALSLAFQHDDEILIEKWLCGPEFT) contributes to the ATP binding site. Positions 257, 270, and 272 each coordinate Mg(2+).

The protein belongs to the D-alanine--D-alanine ligase family. Mg(2+) is required as a cofactor. It depends on Mn(2+) as a cofactor.

The protein localises to the cytoplasm. The enzyme catalyses 2 D-alanine + ATP = D-alanyl-D-alanine + ADP + phosphate + H(+). It participates in cell wall biogenesis; peptidoglycan biosynthesis. Its function is as follows. Cell wall formation. This Salmonella paratyphi A (strain ATCC 9150 / SARB42) protein is D-alanine--D-alanine ligase.